The chain runs to 309 residues: Homoserine O-succinyltransferase (309 aa).

Catalysis depends on cysteine 142, which acts as the Acyl-thioester intermediate. Residues lysine 163 and serine 192 each contribute to the substrate site. Residue histidine 235 is the Proton acceptor of the active site. Residue glutamate 237 is part of the active site. Residue arginine 249 participates in substrate binding.

This sequence belongs to the MetA family.

It localises to the cytoplasm. The catalysed reaction is L-homoserine + succinyl-CoA = O-succinyl-L-homoserine + CoA. It functions in the pathway amino-acid biosynthesis; L-methionine biosynthesis via de novo pathway; O-succinyl-L-homoserine from L-homoserine: step 1/1. In terms of biological role, transfers a succinyl group from succinyl-CoA to L-homoserine, forming succinyl-L-homoserine. The sequence is that of Homoserine O-succinyltransferase from Klebsiella pneumoniae subsp. pneumoniae (strain ATCC 700721 / MGH 78578).